A 1015-amino-acid polypeptide reads, in one-letter code: Cytosolic carboxypeptidase 1 (1015 aa).

Positions 384–462 (LPTATPSTPG…GALPKTTRLN (79 aa)) are disordered. Residues 416–451 (EDGMDEEDEAFVRDDDDEGKDDRGSDDDDGKDDDEI) are compositionally biased toward acidic residues. One can recognise a Peptidase M14 domain in the interval 727 to 1013 (YPYTYSFLNS…DLLHSFLEMT (287 aa)). 3 residues coordinate Zn(2+): His792, Glu795, and His891. Glu977 functions as the Proton donor/acceptor in the catalytic mechanism.

This sequence belongs to the peptidase M14 family. The cofactor is Zn(2+). In terms of tissue distribution, in hermaphrodites and males, expressed in amphid and IL2 ciliated sensory neurons. In males, expressed in CEM head neurons, RnB and HOB tail neurons, and in gubernacular erector and retractor muscles.

The protein localises to the perikaryon. It is found in the cell projection. The protein resides in the cilium. It localises to the dendrite. Catalyzes the deglutamylation of polyglutamate side chains generated by post-translational polyglutamylation of proteins such as tubulins. Via the deglutamylation of tubulin, regulates the localization and velocity of kinesin motors and the structural integrity of microtubules in sensory cilia. In male CEM sensory neurons, regulates the cilia release of bioactive extracellular vesicles. Also regulates microtubule dynamics in uterine muscle cells. In Caenorhabditis elegans, this protein is Cytosolic carboxypeptidase 1.